The chain runs to 329 residues: o-succinylbenzoate synthase (329 aa).

Catalysis depends on lysine 140, which acts as the Proton donor. Residues aspartate 168, glutamate 197, and aspartate 220 each coordinate Mg(2+). Lysine 242 serves as the catalytic Proton acceptor.

It belongs to the mandelate racemase/muconate lactonizing enzyme family. MenC type 1 subfamily. The cofactor is a divalent metal cation.

The catalysed reaction is (1R,6R)-6-hydroxy-2-succinyl-cyclohexa-2,4-diene-1-carboxylate = 2-succinylbenzoate + H2O. Its pathway is quinol/quinone metabolism; 1,4-dihydroxy-2-naphthoate biosynthesis; 1,4-dihydroxy-2-naphthoate from chorismate: step 4/7. The protein operates within quinol/quinone metabolism; menaquinone biosynthesis. Its function is as follows. Converts 2-succinyl-6-hydroxy-2,4-cyclohexadiene-1-carboxylate (SHCHC) to 2-succinylbenzoate (OSB). This is o-succinylbenzoate synthase from Haemophilus influenzae (strain ATCC 51907 / DSM 11121 / KW20 / Rd).